The sequence spans 217 residues: Pyridoxine/pyridoxamine 5'-phosphate oxidase (217 aa).

FMN is bound by residues 66-71 (RMVLLK), 81-82 (FT), Arg87, Lys88, and Gln110. Position 71 (Lys71) interacts with substrate. Positions 128, 132, and 136 each coordinate substrate. FMN-binding positions include 145-146 (QS) and Trp190. 196–198 (RLH) contacts substrate. Arg200 provides a ligand contact to FMN.

Belongs to the pyridoxamine 5'-phosphate oxidase family. In terms of assembly, homodimer. The cofactor is FMN.

The catalysed reaction is pyridoxamine 5'-phosphate + O2 + H2O = pyridoxal 5'-phosphate + H2O2 + NH4(+). It catalyses the reaction pyridoxine 5'-phosphate + O2 = pyridoxal 5'-phosphate + H2O2. Its pathway is cofactor metabolism; pyridoxal 5'-phosphate salvage; pyridoxal 5'-phosphate from pyridoxamine 5'-phosphate: step 1/1. It functions in the pathway cofactor metabolism; pyridoxal 5'-phosphate salvage; pyridoxal 5'-phosphate from pyridoxine 5'-phosphate: step 1/1. Functionally, catalyzes the oxidation of either pyridoxine 5'-phosphate (PNP) or pyridoxamine 5'-phosphate (PMP) into pyridoxal 5'-phosphate (PLP). The polypeptide is Pyridoxine/pyridoxamine 5'-phosphate oxidase (Psychromonas ingrahamii (strain DSM 17664 / CCUG 51855 / 37)).